The chain runs to 292 residues: NAD kinase (292 aa).

The Proton acceptor role is filled by Asp73. NAD(+) is bound by residues 73 to 74, 147 to 148, His158, Arg175, Asp177, 188 to 193, and Gln247; these read DG, NE, and TAYSLS.

The protein belongs to the NAD kinase family. Requires a divalent metal cation as cofactor.

It localises to the cytoplasm. It carries out the reaction NAD(+) + ATP = ADP + NADP(+) + H(+). Its function is as follows. Involved in the regulation of the intracellular balance of NAD and NADP, and is a key enzyme in the biosynthesis of NADP. Catalyzes specifically the phosphorylation on 2'-hydroxyl of the adenosine moiety of NAD to yield NADP. In Pectobacterium atrosepticum (strain SCRI 1043 / ATCC BAA-672) (Erwinia carotovora subsp. atroseptica), this protein is NAD kinase.